The chain runs to 462 residues: 3-oxoacyl-[acyl-carrier-protein] synthase I, chloroplastic (462 aa).

A chloroplast-targeting transit peptide spans 1 to 35 (MHAHAAHALGLRVPPPAFPRRRARPRRRPAAAVLA). Residues 1 to 45 (MHAHAAHALGLRVPPPAFPRRRARPRRRPAAAVLATSAAPQRETD) form a disordered region. Positions 19-29 (PRRRARPRRRP) are enriched in basic residues. A compositionally biased stretch (low complexity) spans 30–39 (AAAVLATSAA). The Ketosynthase family 3 (KS3) domain maps to 47-459 (RKRVVITGMG…GHNSVVVFAP (413 aa)). Catalysis depends on for beta-ketoacyl synthase activity residues Cys213, His353, and His389.

Belongs to the thiolase-like superfamily. Beta-ketoacyl-ACP synthases family. In terms of assembly, homodimer.

Its subcellular location is the plastid. The protein resides in the chloroplast. It catalyses the reaction a fatty acyl-[ACP] + malonyl-[ACP] + H(+) = a 3-oxoacyl-[ACP] + holo-[ACP] + CO2. Its function is as follows. Catalyzes the condensation reaction of fatty acid synthesis by the addition to an acyl acceptor of two carbons from malonyl-ACP. Specific for elongation from C-10 to unsaturated C-16 and C-18 fatty acids. This is 3-oxoacyl-[acyl-carrier-protein] synthase I, chloroplastic (KAS12) from Hordeum vulgare (Barley).